The primary structure comprises 585 residues: MGPAAGNLVRAVLALCWLAEHCAGISSIDIERPGDGRCQPIEIPMCKDIGYNMTRMPNLMGHENQREAAIQLHEFAPLVEYGCHGHLKFFLCSLYAPMCTEQVSTPIPACRVMCEQARLKCSPIMEQFNFKWPDSLDCSKLPNKNDPNYLCMEAPNNGSDEPPRGSSMLPPMFRPQRPSTGHDLQQHKDSLSRTSCENPGKFHHVEKSASCAPLCTPGVDVYWSKDDKQFAVIWIAIWSILCFFSSAFTVLTFLIDPQRFKYPERPIIFLSMCYCVYSVGYIIRLFSGAESIACDRDSGQLYVIQEGLESTGCTIVFLVLYYFGMASSLWWVILTLTWFLAAGKKWGHEAIEANSSYFHLAAWAIPAVKTIMILVMRRVAGDELTGLCYVGSMDVNALTGFVLIPLACYLIIGTSFILSGFVALFHIRRVMKTGGENTDKLEKLMVRIGVFSVLYTVPATCVIACYFYERLNMDYWKIVASQQKCKMNNQTKNLDCMMNNSIPAVEIFMVKIFMLLVVGITSGMWIWTSKTLQSWQNVCSRRLKKRSRRKPASVITSSGIYKKPQHPQKTHLAKYESTLQPPTCV.

Residues 1–24 (MGPAAGNLVRAVLALCWLAEHCAG) form the signal peptide. Residues 25–229 (ISSIDIERPG…DVYWSKDDKQ (205 aa)) lie on the Extracellular side of the membrane. An FZ domain is found at 33–154 (PGDGRCQPIE…NDPNYLCMEA (122 aa)). Cystine bridges form between C38–C99, C46–C92, C83–C121, C110–C151, and C114–C138. A glycan (N-linked (GlcNAc...) asparagine) is linked at N52. The segment at 155-195 (PNNGSDEPPRGSSMLPPMFRPQRPSTGHDLQQHKDSLSRTS) is disordered. Residue N157 is glycosylated (N-linked (GlcNAc...) asparagine). A helical transmembrane segment spans residues 230–250 (FAVIWIAIWSILCFFSSAFTV). Residues 251 to 265 (LTFLIDPQRFKYPER) are Cytoplasmic-facing. Residues 266–286 (PIIFLSMCYCVYSVGYIIRLF) traverse the membrane as a helical segment. At 287–314 (SGAESIACDRDSGQLYVIQEGLESTGCT) the chain is on the extracellular side. A helical transmembrane segment spans residues 315 to 335 (IVFLVLYYFGMASSLWWVILT). Over 336-355 (LTWFLAAGKKWGHEAIEANS) the chain is Cytoplasmic. A helical membrane pass occupies residues 356–376 (SYFHLAAWAIPAVKTIMILVM). Residues 377 to 397 (RRVAGDELTGLCYVGSMDVNA) are Extracellular-facing. Residues 398 to 418 (LTGFVLIPLACYLIIGTSFIL) form a helical membrane-spanning segment. Topologically, residues 419 to 447 (SGFVALFHIRRVMKTGGENTDKLEKLMVR) are cytoplasmic. Residues 448 to 468 (IGVFSVLYTVPATCVIACYFY) traverse the membrane as a helical segment. Residues 469-506 (ERLNMDYWKIVASQQKCKMNNQTKNLDCMMNNSIPAVE) lie on the Extracellular side of the membrane. N-linked (GlcNAc...) asparagine glycosylation is found at N489 and N499. The helical transmembrane segment at 507-527 (IFMVKIFMLLVVGITSGMWIW) threads the bilayer. At 528-585 (TSKTLQSWQNVCSRRLKKRSRRKPASVITSSGIYKKPQHPQKTHLAKYESTLQPPTCV) the chain is on the cytoplasmic side. Residues 530–535 (KTLQSW) carry the Lys-Thr-X-X-X-Trp motif, mediates interaction with the PDZ domain of Dvl family members motif. Positions 583–585 (TCV) match the PDZ-binding motif.

It belongs to the G-protein coupled receptor Fz/Smo family. In terms of assembly, interacts with WNT7A. Expressed in the dorsal ectoderm overlying the developing spinal cord.

It is found in the cell membrane. Receptor for Wnt proteins. Functions in the canonical Wnt/beta-catenin signaling pathway. Activation by WNT7A induces expression of beta-catenin target genes. The canonical Wnt/beta-catenin signaling pathway leads to the activation of disheveled proteins, inhibition of GSK-3 kinase, nuclear accumulation of beta-catenin and activation of Wnt target genes. A second signaling pathway involving PKC and calcium fluxes has been seen for some family members, but it is not yet clear if it represents a distinct pathway or if it can be integrated in the canonical pathway, as PKC seems to be required for Wnt-mediated inactivation of GSK-3 kinase. Both pathways seem to involve interactions with G-proteins. May be involved in transduction and intercellular transmission of polarity information during tissue morphogenesis and/or in differentiated tissues. The sequence is that of Frizzled-10 (FZD10) from Gallus gallus (Chicken).